A 313-amino-acid chain; its full sequence is Tyrosine recombinase slr0733 (313 aa).

The Core-binding (CB) domain maps to 7-101 (NNLSGLNQNI…AIKSLVNYAR (95 aa)). Residues 122 to 307 (RDTTGVSPTS…RHQHQAQITD (186 aa)) form the Tyr recombinase domain. Residues arginine 162, lysine 188, histidine 258, arginine 261, and histidine 285 contribute to the active site. The active-site O-(3'-phospho-DNA)-tyrosine intermediate is tyrosine 294.

Belongs to the 'phage' integrase family.

The protein localises to the cytoplasm. In terms of biological role, site-specific tyrosine recombinase, which acts by catalyzing the cutting and rejoining of the recombining DNA molecules. The sequence is that of Tyrosine recombinase slr0733 from Synechocystis sp. (strain ATCC 27184 / PCC 6803 / Kazusa).